We begin with the raw amino-acid sequence, 430 residues long: Serine--tRNA ligase (430 aa).

Residues 45–58 (ENLQAERNSRSKSI) are compositionally biased toward polar residues. Residues 45–65 (ENLQAERNSRSKSIGQAKARG) form a disordered region. 237-239 (TSE) contributes to the L-serine binding site. ATP is bound at residue 268–270 (RSE). Residue E291 coordinates L-serine. 355–358 (EISS) serves as a coordination point for ATP. L-serine is bound at residue S391.

This sequence belongs to the class-II aminoacyl-tRNA synthetase family. Type-1 seryl-tRNA synthetase subfamily. In terms of assembly, homodimer. The tRNA molecule binds across the dimer.

It localises to the cytoplasm. The catalysed reaction is tRNA(Ser) + L-serine + ATP = L-seryl-tRNA(Ser) + AMP + diphosphate + H(+). The enzyme catalyses tRNA(Sec) + L-serine + ATP = L-seryl-tRNA(Sec) + AMP + diphosphate + H(+). The protein operates within aminoacyl-tRNA biosynthesis; selenocysteinyl-tRNA(Sec) biosynthesis; L-seryl-tRNA(Sec) from L-serine and tRNA(Sec): step 1/1. Its function is as follows. Catalyzes the attachment of serine to tRNA(Ser). Is also able to aminoacylate tRNA(Sec) with serine, to form the misacylated tRNA L-seryl-tRNA(Sec), which will be further converted into selenocysteinyl-tRNA(Sec). The protein is Serine--tRNA ligase of Erwinia tasmaniensis (strain DSM 17950 / CFBP 7177 / CIP 109463 / NCPPB 4357 / Et1/99).